The sequence spans 269 residues: Phosphate import ATP-binding protein PstB 1 (269 aa).

The ABC transporter domain maps to 16 to 255; that stretch reads FTTQNLDIYY…DRTGKVFGDP (240 aa). 48 to 55 contacts ATP; the sequence is GPSGCGKS.

It belongs to the ABC transporter superfamily. Phosphate importer (TC 3.A.1.7) family. As to quaternary structure, the complex is composed of two ATP-binding proteins (PstB), two transmembrane proteins (PstC and PstA) and a solute-binding protein (PstS).

The protein localises to the cell inner membrane. The enzyme catalyses phosphate(out) + ATP + H2O = ADP + 2 phosphate(in) + H(+). Part of the ABC transporter complex PstSACB involved in phosphate import. Responsible for energy coupling to the transport system. In Synechocystis sp. (strain ATCC 27184 / PCC 6803 / Kazusa), this protein is Phosphate import ATP-binding protein PstB 1.